A 51-amino-acid polypeptide reads, in one-letter code: Glutamine synthetase (51 aa).

This sequence belongs to the glutamine synthetase family. In terms of assembly, homooctamer.

The protein resides in the cytoplasm. The enzyme catalyses L-glutamate + NH4(+) + ATP = L-glutamine + ADP + phosphate + H(+). The sequence is that of Glutamine synthetase from Vitis sp. (Grape).